The chain runs to 228 residues: 7-cyano-7-deazaguanine synthase (228 aa).

Tyr-9–Met-19 contributes to the ATP binding site. Cys-189, Cys-199, Cys-202, and Cys-205 together coordinate Zn(2+).

It belongs to the QueC family. Requires Zn(2+) as cofactor.

The catalysed reaction is 7-carboxy-7-deazaguanine + NH4(+) + ATP = 7-cyano-7-deazaguanine + ADP + phosphate + H2O + H(+). Its pathway is purine metabolism; 7-cyano-7-deazaguanine biosynthesis. Catalyzes the ATP-dependent conversion of 7-carboxy-7-deazaguanine (CDG) to 7-cyano-7-deazaguanine (preQ(0)). This is 7-cyano-7-deazaguanine synthase from Geotalea uraniireducens (strain Rf4) (Geobacter uraniireducens).